The primary structure comprises 294 residues: MAVTGTERVKRGMAEMQKGGVIMDVVNAEQAKIAEAAGAVAVMALERVPADIRAAGGVARMADPTVIEEVMKAVSIPVMAKARIGHYVEARVLEALGVDYIDESEVLTPADEEFHIDKRQFTVPFVCGCRDLGEAARRIAEGASMLRTKGEPGTGNIVEAVRHMRKVNAQVRKVVSMSEDELMTEAKNLGAPFEVLLEIKRLGRLPVVNFAAGGVATPADAALMMHLGADGVFVGSGIFKSENPEKYARAIVEATTHYEDYELIAHLSKGLGGAMKGIDISSLLPEQRMQERGW.

Asp-24 lines the D-ribose 5-phosphate pocket. Lys-81 acts as the Schiff-base intermediate with D-ribose 5-phosphate in catalysis. Gly-153 contributes to the D-ribose 5-phosphate binding site. Arg-165 lines the D-glyceraldehyde 3-phosphate pocket. D-ribose 5-phosphate is bound by residues Gly-214 and 235–236; that span reads GS.

Belongs to the PdxS/SNZ family. In the presence of PdxT, forms a dodecamer of heterodimers.

The enzyme catalyses aldehydo-D-ribose 5-phosphate + D-glyceraldehyde 3-phosphate + L-glutamine = pyridoxal 5'-phosphate + L-glutamate + phosphate + 3 H2O + H(+). It participates in cofactor biosynthesis; pyridoxal 5'-phosphate biosynthesis. Catalyzes the formation of pyridoxal 5'-phosphate from ribose 5-phosphate (RBP), glyceraldehyde 3-phosphate (G3P) and ammonia. The ammonia is provided by the PdxT subunit. Can also use ribulose 5-phosphate and dihydroxyacetone phosphate as substrates, resulting from enzyme-catalyzed isomerization of RBP and G3P, respectively. The chain is Pyridoxal 5'-phosphate synthase subunit PdxS from Anoxybacillus flavithermus (strain DSM 21510 / WK1).